The primary structure comprises 212 residues: Small ribosomal subunit protein eS1 (212 aa).

This sequence belongs to the eukaryotic ribosomal protein eS1 family.

This Haloquadratum walsbyi (strain DSM 16790 / HBSQ001) protein is Small ribosomal subunit protein eS1.